The primary structure comprises 262 residues: MSRIHPTAIVEPGAQLDESVEVGPYAVIGAHVTIGARTTVGSHSVIEGHTTLGEDNRIGHYASVGGRPQDMKYKDEPTRLVIGNRNTIREFTTIHTGTMQDAGVTTLGDDNWIMAYVHIGHDCHVGSNVILSSNAQMAGHVTIGDHAIVGGMSGVHQFVRIGAHSMLGGASALVQDIPPFVIAAGNKAEPHGINVEGLRRRGFSPDAISALRAAYRVLYKNGLSLEEAKVQLRELATAGGDGDAPVQTLLAFVEASQRGIIR.

Belongs to the transferase hexapeptide repeat family. LpxA subfamily. As to quaternary structure, homotrimer.

It is found in the cytoplasm. The catalysed reaction is a (3R)-hydroxyacyl-[ACP] + UDP-N-acetyl-alpha-D-glucosamine = a UDP-3-O-[(3R)-3-hydroxyacyl]-N-acetyl-alpha-D-glucosamine + holo-[ACP]. The protein operates within glycolipid biosynthesis; lipid IV(A) biosynthesis; lipid IV(A) from (3R)-3-hydroxytetradecanoyl-[acyl-carrier-protein] and UDP-N-acetyl-alpha-D-glucosamine: step 1/6. In terms of biological role, involved in the biosynthesis of lipid A, a phosphorylated glycolipid that anchors the lipopolysaccharide to the outer membrane of the cell. The chain is Acyl-[acyl-carrier-protein]--UDP-N-acetylglucosamine O-acyltransferase from Paraburkholderia phytofirmans (strain DSM 17436 / LMG 22146 / PsJN) (Burkholderia phytofirmans).